Consider the following 278-residue polypeptide: Large ribosomal subunit protein uL2 (278 aa).

Disordered stretches follow at residues 26-57 (RSTP…QGGG) and 225-278 (VMNP…NKKR). Residues 258–278 (RSPKKASNKYIVRRRKTNKKR) show a composition bias toward basic residues.

It belongs to the universal ribosomal protein uL2 family. Part of the 50S ribosomal subunit. Forms a bridge to the 30S subunit in the 70S ribosome.

In terms of biological role, one of the primary rRNA binding proteins. Required for association of the 30S and 50S subunits to form the 70S ribosome, for tRNA binding and peptide bond formation. It has been suggested to have peptidyltransferase activity; this is somewhat controversial. Makes several contacts with the 16S rRNA in the 70S ribosome. The chain is Large ribosomal subunit protein uL2 from Streptomyces coelicolor (strain ATCC BAA-471 / A3(2) / M145).